The following is a 201-amino-acid chain: GTP cyclohydrolase 1 (201 aa).

The Zn(2+) site is built by Cys-90, His-93, and Cys-163.

It belongs to the GTP cyclohydrolase I family. As to quaternary structure, homomer.

The enzyme catalyses GTP + H2O = 7,8-dihydroneopterin 3'-triphosphate + formate + H(+). It functions in the pathway cofactor biosynthesis; 7,8-dihydroneopterin triphosphate biosynthesis; 7,8-dihydroneopterin triphosphate from GTP: step 1/1. This Streptomyces griseus subsp. griseus (strain JCM 4626 / CBS 651.72 / NBRC 13350 / KCC S-0626 / ISP 5235) protein is GTP cyclohydrolase 1.